A 340-amino-acid polypeptide reads, in one-letter code: MTDHALLLVNLGSPASTSVADVRSYLNQFLMDPYVIDLPWPVRRLLVSLILIKRPEQSAHAYASIWWEEGSPLVVLSRRLQKVMSEQWKQGPVELAMRYGEPSIESVLLKLVAQGQRKITLAPLYPQFADSTVTTVVEEARRVVREHKLDVQFSVLQPFYDQPEYIEALEASTRPHLQQPFDHLLLSFHGLPERHLNKLNPGHSLDGAGDCCAESSPQVLANCYRGQCFRTARAFAQQMGLADGQWSVSFQSRLGRAKWIEPYTEARLDELGKQGVKKLLVMCPAFVADCIETLEEIGDRGREQFREAGGEELVLIPCLNDDPQWAKALNALCERAPLAL.

2 residues coordinate Fe cation: His-189 and Glu-292.

The protein belongs to the ferrochelatase family.

Its subcellular location is the cytoplasm. The enzyme catalyses heme b + 2 H(+) = protoporphyrin IX + Fe(2+). Its pathway is porphyrin-containing compound metabolism; protoheme biosynthesis; protoheme from protoporphyrin-IX: step 1/1. Its function is as follows. Catalyzes the ferrous insertion into protoporphyrin IX. This Pseudomonas fluorescens (strain ATCC BAA-477 / NRRL B-23932 / Pf-5) protein is Ferrochelatase.